The primary structure comprises 504 residues: MTQTNGFDALHAHAQRLRGAAIPALLAAEPERPTQYAWQVGPLYFNFARQKYDRAALDALFAIARERDLAGAFQRLFRGEQVNVTEQRAALHTALRGDLTDAPVASEAYATAAEVRQRMGALIQQLEATDVTDIVSVGIGGSDLGPRLVADALRPVSGARLRVHFVSNVDGAAMQRTLATLDPARTAGILISKTFGTQETLLNGSILHAWLGGSERLYAVSANPERAAKAFDIAPGRVLPMWDWVGGRYSLWSAVGFPIALAIGFERFEQLLEGAAQFDAHALNTPLEENVAVLHGLTAVWNRNLLGSATHAVMTYDQRLALLPAYLQQLVMESLGKRVKLDGSTVDSDTVSVWWGGAGTDVQHSFFQALHQGTSVVPADFIGTVHNDDPYAENHVALMANVLAQTEALANGQDSSDPHRSYPGGRPSTVILLDALTPQALGALISMYEHSVYVQSVMWGINAFDQFGVELGKQLASQLLPALKGESADVADPVTRELLSKLRG.

Residue Glu333 is the Proton donor of the active site. Residues His364 and Lys473 contribute to the active site.

This sequence belongs to the GPI family.

The protein resides in the cytoplasm. The enzyme catalyses alpha-D-glucose 6-phosphate = beta-D-fructose 6-phosphate. The protein operates within carbohydrate biosynthesis; gluconeogenesis. It functions in the pathway carbohydrate degradation; glycolysis; D-glyceraldehyde 3-phosphate and glycerone phosphate from D-glucose: step 2/4. Catalyzes the reversible isomerization of glucose-6-phosphate to fructose-6-phosphate. The polypeptide is Glucose-6-phosphate isomerase (Xanthomonas oryzae pv. oryzae (strain PXO99A)).